We begin with the raw amino-acid sequence, 504 residues long: Myocilin (504 aa).

A signal peptide spans methionine 1–alanine 32. An N-linked (GlcNAc...) asparagine glycan is attached at asparagine 57. The stretch at leucine 74 to glutamine 184 forms a coiled coil. Disordered stretches follow at residues glutamine 106–leucine 131 and leucine 170–arginine 200. Positions glycine 122 to leucine 131 are enriched in basic and acidic residues. The Olfactomedin-like domain occupies glycine 244–lysine 503. Cysteines 245 and 433 form a disulfide. Ca(2+)-binding residues include aspartate 380, asparagine 428, alanine 429, isoleucine 477, and aspartate 478. Residues serine 502–methionine 504 carry the Microbody targeting signal motif.

Homodimer (via N-terminus). Can also form higher oligomers. Interacts with OLFM3, FN1, NRCAM, GLDN and NFASC. Interacts (via N-terminus) with MYL2. Interacts with SFRP1, FRZB, FZD7, FZD10, FZD1 and WIF1; regulates Wnt signaling. Interacts with SNTA1; regulates muscle hypertrophy. Interacts with ERBB2 and ERBB3; activates ERBB2-ERBB3 signaling pathway. Interacts with SNCG; affects its secretion and its aggregation. Different isoforms may arise by post-translational modifications. In terms of processing, glycosylated. Post-translationally, palmitoylated. Undergoes a calcium-dependent proteolytic cleavage at Arg-226 by CAPN2 in the endoplasmic reticulum. The result is the production of two fragments, one of 35 kDa containing the C-terminal olfactomedin-like domain, and another of 20 kDa containing the N-terminal leucine zipper-like domain. As to expression, detected in aqueous humor. Detected in the eye (at protein level). Widely expressed. Highly expressed in various types of muscle, ciliary body, papillary sphincter, skeletal muscle, heart, and bone marrow-derived mesenchymal stem cells. Expressed predominantly in the retina. In normal eyes, found in the inner uveal meshwork region and the anterior portion of the meshwork. In contrast, in many glaucomatous eyes, it is found in more regions of the meshwork and seems to be expressed at higher levels than in normal eyes, regardless of the type or clinical severity of glaucoma. The myocilin 35 kDa fragment is detected in aqueous humor and to a lesser extent in iris and ciliary body.

The protein localises to the secreted. It localises to the golgi apparatus. It is found in the cytoplasmic vesicle. Its subcellular location is the extracellular space. The protein resides in the extracellular matrix. The protein localises to the extracellular exosome. It localises to the mitochondrion. It is found in the mitochondrion intermembrane space. Its subcellular location is the mitochondrion inner membrane. The protein resides in the mitochondrion outer membrane. The protein localises to the rough endoplasmic reticulum. It localises to the cell projection. It is found in the cilium. Its subcellular location is the endoplasmic reticulum. Functionally, secreted glycoprotein regulating the activation of different signaling pathways in adjacent cells to control different processes including cell adhesion, cell-matrix adhesion, cytoskeleton organization and cell migration. Promotes substrate adhesion, spreading and formation of focal contacts. Negatively regulates cell-matrix adhesion and stress fiber assembly through Rho protein signal transduction. Modulates the organization of actin cytoskeleton by stimulating the formation of stress fibers through interactions with components of Wnt signaling pathways. Promotes cell migration through activation of PTK2 and the downstream phosphatidylinositol 3-kinase signaling. Plays a role in bone formation and promotes osteoblast differentiation in a dose-dependent manner through mitogen-activated protein kinase signaling. Mediates myelination in the peripheral nervous system through ERBB2/ERBB3 signaling. Plays a role as a regulator of muscle hypertrophy through the components of dystrophin-associated protein complex. Involved in positive regulation of mitochondrial depolarization. Plays a role in neurite outgrowth. May participate in the obstruction of fluid outflow in the trabecular meshwork. In Homo sapiens (Human), this protein is Myocilin (MYOC).